We begin with the raw amino-acid sequence, 337 residues long: Protein RecA (337 aa).

An ATP-binding site is contributed by 66-73 (GPESSGKT).

The protein belongs to the RecA family.

The protein localises to the cytoplasm. In terms of biological role, can catalyze the hydrolysis of ATP in the presence of single-stranded DNA, the ATP-dependent uptake of single-stranded DNA by duplex DNA, and the ATP-dependent hybridization of homologous single-stranded DNAs. It interacts with LexA causing its activation and leading to its autocatalytic cleavage. The sequence is that of Protein RecA from Mesomycoplasma hyopneumoniae (strain J / ATCC 25934 / NCTC 10110) (Mycoplasma hyopneumoniae).